The following is a 436-amino-acid chain: 3-ketoacyl-CoA thiolase (436 aa).

The active-site Acyl-thioester intermediate is the Cys-99. Residues His-392 and Cys-422 each act as proton acceptor in the active site.

The protein belongs to the thiolase-like superfamily. Thiolase family. Heterotetramer of two alpha chains (FadJ) and two beta chains (FadI).

The protein resides in the cytoplasm. The catalysed reaction is an acyl-CoA + acetyl-CoA = a 3-oxoacyl-CoA + CoA. It functions in the pathway lipid metabolism; fatty acid beta-oxidation. In terms of biological role, catalyzes the final step of fatty acid oxidation in which acetyl-CoA is released and the CoA ester of a fatty acid two carbons shorter is formed. This chain is 3-ketoacyl-CoA thiolase, found in Salmonella paratyphi B (strain ATCC BAA-1250 / SPB7).